Consider the following 347-residue polypeptide: Phenylalanine--tRNA ligase alpha subunit (347 aa).

Glu-261 is a binding site for Mg(2+).

This sequence belongs to the class-II aminoacyl-tRNA synthetase family. Phe-tRNA synthetase alpha subunit type 1 subfamily. Tetramer of two alpha and two beta subunits. Requires Mg(2+) as cofactor.

The protein resides in the cytoplasm. It catalyses the reaction tRNA(Phe) + L-phenylalanine + ATP = L-phenylalanyl-tRNA(Phe) + AMP + diphosphate + H(+). The polypeptide is Phenylalanine--tRNA ligase alpha subunit (Streptococcus pyogenes serotype M1).